Consider the following 477-residue polypeptide: Histidine--tRNA ligase (477 aa).

Belongs to the class-II aminoacyl-tRNA synthetase family. In terms of assembly, homodimer.

It is found in the cytoplasm. It catalyses the reaction tRNA(His) + L-histidine + ATP = L-histidyl-tRNA(His) + AMP + diphosphate + H(+). This Xanthomonas campestris pv. campestris (strain 8004) protein is Histidine--tRNA ligase.